The primary structure comprises 813 residues: Calpain-7 (813 aa).

Methionine 1 carries the N-acetylmethionine modification. Threonine 95 is subject to Phosphothreonine. In terms of domain architecture, Calpain catalytic spans arginine 232–proline 540. Catalysis depends on residues cysteine 290, histidine 458, and asparagine 478. Residues glycine 541–alanine 701 form a domain III region. The segment at glycine 702–glutamine 813 is domain N.

This sequence belongs to the peptidase C2 family.

The protein resides in the nucleus. In terms of biological role, calcium-regulated non-lysosomal thiol-protease. This chain is Calpain-7 (CAPN7), found in Sus scrofa (Pig).